The following is a 274-amino-acid chain: Putative 2-succinyl-6-hydroxy-2,4-cyclohexadiene-1-carboxylate synthase (274 aa).

One can recognise an AB hydrolase-1 domain in the interval 26–259 (AVVCLHGFTG…KAGHTVHVEQ (234 aa)).

Belongs to the AB hydrolase superfamily. MenH family. Monomer.

It carries out the reaction 5-enolpyruvoyl-6-hydroxy-2-succinyl-cyclohex-3-ene-1-carboxylate = (1R,6R)-6-hydroxy-2-succinyl-cyclohexa-2,4-diene-1-carboxylate + pyruvate. Its pathway is quinol/quinone metabolism; 1,4-dihydroxy-2-naphthoate biosynthesis; 1,4-dihydroxy-2-naphthoate from chorismate: step 3/7. It functions in the pathway quinol/quinone metabolism; menaquinone biosynthesis. Its function is as follows. Catalyzes a proton abstraction reaction that results in 2,5-elimination of pyruvate from 2-succinyl-5-enolpyruvyl-6-hydroxy-3-cyclohexene-1-carboxylate (SEPHCHC) and the formation of 2-succinyl-6-hydroxy-2,4-cyclohexadiene-1-carboxylate (SHCHC). The sequence is that of Putative 2-succinyl-6-hydroxy-2,4-cyclohexadiene-1-carboxylate synthase from Bacillus subtilis (strain 168).